Consider the following 296-residue polypeptide: Nucleotide-binding protein RSc0403 (296 aa).

8–15 (GMSGSGKS) is a binding site for ATP. Residue 57 to 60 (DIRS) coordinates GTP. The disordered stretch occupies residues 99–124 (TRRRHPLSIRNGRPDAGNPPSAAKGP).

Belongs to the RapZ-like family.

In terms of biological role, displays ATPase and GTPase activities. This Ralstonia nicotianae (strain ATCC BAA-1114 / GMI1000) (Ralstonia solanacearum) protein is Nucleotide-binding protein RSc0403.